Consider the following 109-residue polypeptide: uncharacterized protein (109 aa).

The chain crosses the membrane as a helical span at residues 90 to 107; the sequence is IICNFWGSLLGVGIAFYQ.

The protein localises to the membrane. This is an uncharacterized protein from Saccharomyces cerevisiae (strain ATCC 204508 / S288c) (Baker's yeast).